The following is a 51-amino-acid chain: Astexin-1 (51 aa).

A propeptide spanning residues 1-28 (MHTPIISETVQPKTAGLIVLGKASAETR) is cleaved from the precursor. The isoaspartyl glycine isopeptide (Gly-Asp) cross-link spans 29 to 37 (GLSQGVEPD).

Post-translationally, this lasso peptide is probably hydrolyzed to a linear form by the isopeptidase AtxE1, in vivo.

Functionally, shows weak antimicrobial activity against its phylogenetic relative Caulobacter crescentus. Does not show activity against other bacteria tested (E.coli, Vibrio sp, Burkhoderia thailandensis, and Salmonella newport). In Asticcacaulis excentricus (strain ATCC 15261 / DSM 4724 / KCTC 12464 / NCIMB 9791 / VKM B-1370 / CB 48), this protein is Astexin-1.